Here is a 269-residue protein sequence, read N- to C-terminus: Zinc transporter ZupT (269 aa).

8 consecutive transmembrane segments (helical) span residues 11 to 31 (IALAVTLAAGLATAIGSLLVL), 40 to 60 (LLAFGLAFAGGAMVYVSLSEI), 80 to 100 (YGTLAFLLGVIVIVLIDHFIP), 125 to 145 (ALLTSIAITAHNFPEGLATFF), 158 to 178 (AFAIAIHNIPEGIAIAVPVYF), 187 to 207 (FSASLLSGLAEPVGAALGYWL), 217 to 237 (FGWVFGLIAGVMVFLALDELL), and 249 to 269 (TVYGLVAGMGTLAISLVLFKW). Fe(2+) is bound by residues asparagine 136 and glutamate 139. Residues glutamate 139 and histidine 164 each contribute to the Zn(2+) site. Fe(2+) contacts are provided by asparagine 165, glutamate 168, and glutamate 197. Zn(2+) is bound at residue glutamate 168.

It belongs to the ZIP transporter (TC 2.A.5) family. ZupT subfamily.

It is found in the cell inner membrane. The enzyme catalyses Zn(2+)(in) = Zn(2+)(out). Its function is as follows. Mediates zinc uptake. May also transport other divalent cations. This is Zinc transporter ZupT from Stenotrophomonas maltophilia (strain R551-3).